We begin with the raw amino-acid sequence, 164 residues long: uncharacterized protein (164 aa).

CBS domains follow at residues 9–66 (ATTK…DIDS) and 72–128 (MTKD…VHTM).

This is an uncharacterized protein from Acidianus ambivalens (Desulfurolobus ambivalens).